The sequence spans 447 residues: Maintenance of mitochondrial morphology protein 1 (447 aa).

The Lumenal segment spans residues Met1–Gly109. The helical transmembrane segment at Leu110–Phe130 threads the bilayer. The Cytoplasmic portion of the chain corresponds to Ser131 to Leu447. Positions Ser208–Pro421 constitute an SMP-LTD domain.

This sequence belongs to the MMM1 family. Homodimer. Component of the ER-mitochondria encounter structure (ERMES) or MDM complex, composed of MMM1, MDM10, MDM12 and MDM34. An MMM1 homodimer associates with one molecule of MDM12 on each side in a pairwise head-to-tail manner, and the SMP-LTD domains of MMM1 and MDM12 generate a continuous hydrophobic tunnel for phospholipid trafficking.

The protein localises to the endoplasmic reticulum membrane. Functionally, component of the ERMES/MDM complex, which serves as a molecular tether to connect the endoplasmic reticulum (ER) and mitochondria. Components of this complex are involved in the control of mitochondrial shape and protein biogenesis, and function in nonvesicular lipid trafficking between the ER and mitochondria. The MDM12-MMM1 subcomplex functions in the major beta-barrel assembly pathway that is responsible for biogenesis of all outer membrane beta-barrel proteins, and acts in a late step after the SAM complex. The MDM10-MDM12-MMM1 subcomplex further acts in the TOM40-specific pathway after the action of the MDM12-MMM1 complex. Essential for establishing and maintaining the structure of mitochondria and maintenance of mtDNA nucleoids. The protein is Maintenance of mitochondrial morphology protein 1 of Lachancea thermotolerans (strain ATCC 56472 / CBS 6340 / NRRL Y-8284) (Yeast).